Here is a 693-residue protein sequence, read N- to C-terminus: Endoprotease bli (693 aa).

The N-terminal stretch at 1 to 20 (MYWQLVRILVLFDCLQKILA) is a signal peptide. A propeptide spans 21–116 (IEHDSICIAD…EQRPRVRRKR (96 aa)) (inhibition peptide). Asp-161 is a Ca(2+) binding site. The 316-residue stretch at 167-482 (QWYLNNGAQG…YGLMDAGALV (316 aa)) folds into the Peptidase S8 domain. N-linked (GlcNAc...) asparagine glycosylation is present at Asn-194. The active-site Charge relay system is the Asp-201. Asp-202 is a substrate binding site. Ca(2+) contacts are provided by Asp-210, Asp-222, Asp-227, and Asp-229. Positions 215–242 (YDPLASTDINGHDDDPTPQDDGDNKHGT) are disordered. 237-238 (DN) is a substrate binding site. His-240 acts as the Charge relay system in catalysis. 4 residues coordinate Ca(2+): Ile-251, Asn-254, Tyr-256, and Gly-258. 2 disulfide bridges follow: Cys-257/Cys-406 and Cys-349/Cys-379. Residues Glu-282, 299-304 (SWGPED), Asp-310, and 338-341 (ASGN) each bind substrate. Asp-304 contributes to the Ca(2+) binding site. Asp-347 provides a ligand contact to Ca(2+). Substrate contacts are provided by Asp-352 and Tyr-354. Residue Glu-377 participates in Ca(2+) binding. The active-site Charge relay system is the Ser-414. Ser-414 lines the substrate pocket. Residues Asn-433 and Asn-518 are each glycosylated (N-linked (GlcNAc...) asparagine). Residues 490–628 (TVPEQHICTY…SLLLYGTAEP (139 aa)) form the P/Homo B domain. Residues Cys-497 and Cys-526 are joined by a disulfide bond. Positions 629–693 (AQPNDPRHSS…LVSAQPELRV (65 aa)) are disordered. The span at 668–681 (DSRDWQPKKVENKK) shows a compositional bias: basic and acidic residues.

Belongs to the peptidase S8 family. Furin subfamily. Ca(2+) serves as cofactor. N-glycosylated. In terms of processing, the inhibition peptide, which plays the role of an intramolecular chaperone, is probably autocatalytically removed in the endoplasmic reticulum (ER) and remains non-covalently bound as a potent autoinhibitor. Probably following transport to the trans Golgi, a second cleavage within the inhibition propeptide results in propeptide dissociation and bli activation.

It localises to the secreted. The catalysed reaction is Release of mature proteins from their proproteins by cleavage of -Arg-Xaa-Yaa-Arg-|-Zaa- bonds, where Xaa can be any amino acid and Yaa is Arg or Lys. Releases albumin, complement component C3 and von Willebrand factor from their respective precursors.. With respect to regulation, inhibited by the propeptide before the second cleavage. Inhibited by ethylenediaminetetraacetic acid (EDTA), ZnSO(4) and chloroketone DEC-RVKR-CMK. Functionally, serine endoprotease which cleaves substrates at the RX(K/R)R consensus motif. The sequence is that of Endoprotease bli from Onchocerca volvulus.